The sequence spans 112 residues: MTKLADMKCEACQADAPKVTDSELAELIRLIPDWGVEVRDGIMQLERVYKFKNFKLAMEFTNKLAELAEEEFHHPGILTEWGKVTVTWWSHSVKGLHRNDFIMASKTDQLLG.

This sequence belongs to the pterin-4-alpha-carbinolamine dehydratase family.

The enzyme catalyses (4aS,6R)-4a-hydroxy-L-erythro-5,6,7,8-tetrahydrobiopterin = (6R)-L-erythro-6,7-dihydrobiopterin + H2O. This Shewanella woodyi (strain ATCC 51908 / MS32) protein is Putative pterin-4-alpha-carbinolamine dehydratase.